We begin with the raw amino-acid sequence, 586 residues long: Proton channel OTOP1 (586 aa).

The Cytoplasmic segment spans residues methionine 1–alanine 52. Residues glutamate 53–leucine 74 traverse the membrane as a helical segment. Residues alanine 75 to lysine 82 are Extracellular-facing. Residues glutamate 83–isoleucine 106 form a helical membrane-spanning segment. Residues arginine 107–alanine 124 are Cytoplasmic-facing. A helical membrane pass occupies residues serine 125–glycine 147. Residues tyrosine 148–serine 157 are Extracellular-facing. The helical transmembrane segment at alanine 158–isoleucine 182 threads the bilayer. At lysine 183–glutamate 190 the chain is on the cytoplasmic side. A helical membrane pass occupies residues threonine 191–glutamate 217. Topologically, residues histidine 218–serine 255 are extracellular. Residues threonine 256–lysine 281 form a helical membrane-spanning segment. Over asparagine 282–leucine 303 the chain is Cytoplasmic. A helical transmembrane segment spans residues leucine 304–isoleucine 326. The Extracellular portion of the chain corresponds to histidine 327–glutamate 336. A helical membrane pass occupies residues alanine 337–leucine 362. The Cytoplasmic portion of the chain corresponds to valine 363 to threonine 380. A helical membrane pass occupies residues leucine 381–valine 405. Over alanine 406 to tryptophan 417 the chain is Extracellular. Residues threonine 418–valine 438 form a helical membrane-spanning segment. At glutamate 439–lysine 518 the chain is on the cytoplasmic side. A disordered region spans residues proline 484–arginine 505. The chain crosses the membrane as a helical span at residues asparagine 519–phenylalanine 537. Topologically, residues glycine 538–serine 555 are extracellular. The chain crosses the membrane as a helical span at residues valine 556–leucine 579. The Cytoplasmic portion of the chain corresponds to phenylalanine 580–valine 586.

It belongs to the otopetrin family. In terms of assembly, homodimer.

It is found in the cell membrane. The protein localises to the cell projection. The protein resides in the microvillus. The enzyme catalyses H(+)(in) = H(+)(out). Its activity is regulated as follows. Activated by both acid and alkali, with proton influx in response to extracellular acid and proton efflux during alkali stimulation. Inhibited by Zn(2+); this inhibition is thought to be pH-sensitive. Currents evoked in response to mild acid (pH 6.0) stimulus may also be mildly potentiated by exposure to Zn(2+). Activated by NH(4)Cl. Its function is as follows. Proton-selective ion channel. Biphasically modulated by acid and alkali, mediating proton influx and efflux in response to extracellular acid and base stimulation, respectively. May be involved in acid and base perception. Sensor for ammonium chloride (NH(4)Cl) in taste receptor cells. NH(4)Cl acts by increasing the intracellular pH, thereby generating a driving force for proton entry through OTOP1 channel. Plays a role in the regulation of Ca(2+) flux in response to purigenic (ATP, ADP and UDP) stimuli, leading to increase in cytosolic Ca(2+) due to influx of extracellular calcium. May play this role by inhibiting P2Y purinoceptor-mediated Ca(2+) release in a Ca(2+)-dependent manner and promote an influx of Ca(2+) in response to ATP. Through this mechanism and possibly others, plays a role in the formation and function of calcium carbonate-based structures in the vestibular system of the inner ear, called otoconia, that sense gravity and linear acceleration. This chain is Proton channel OTOP1, found in Danio rerio (Zebrafish).